A 305-amino-acid polypeptide reads, in one-letter code: Heat stress transcription factor B-4d (305 aa).

Residues leucine 201–valine 230 are hydrophobic repeat HR-A/B. A Nuclear localization signal motif is present at residues lysine 286–arginine 289. The disordered stretch occupies residues lysine 286 to glycine 305. Over residues glutamine 294–glycine 305 the composition is skewed to acidic residues.

The protein belongs to the HSF family. Class B subfamily. In terms of assembly, homotrimer. Post-translationally, exhibits temperature-dependent phosphorylation.

It is found in the nucleus. Transcriptional regulator that specifically binds DNA of heat shock promoter elements (HSE). The sequence is that of Heat stress transcription factor B-4d (HSFB4D) from Oryza sativa subsp. japonica (Rice).